Reading from the N-terminus, the 583-residue chain is Aspartate--tRNA(Asp/Asn) ligase (583 aa).

Glu173 provides a ligand contact to L-aspartate. Residues 197 to 200 are aspartate; that stretch reads QMFK. Residue Arg219 coordinates L-aspartate. ATP is bound by residues 219–221 and Gln228; that span reads RDE. His447 contributes to the L-aspartate binding site. An ATP-binding site is contributed by Glu481. Arg488 is a binding site for L-aspartate. 533–536 lines the ATP pocket; that stretch reads GLDR.

Belongs to the class-II aminoacyl-tRNA synthetase family. Type 1 subfamily. Homodimer.

Its subcellular location is the cytoplasm. It carries out the reaction tRNA(Asx) + L-aspartate + ATP = L-aspartyl-tRNA(Asx) + AMP + diphosphate. Its function is as follows. Aspartyl-tRNA synthetase with relaxed tRNA specificity since it is able to aspartylate not only its cognate tRNA(Asp) but also tRNA(Asn). Reaction proceeds in two steps: L-aspartate is first activated by ATP to form Asp-AMP and then transferred to the acceptor end of tRNA(Asp/Asn). The sequence is that of Aspartate--tRNA(Asp/Asn) ligase from Elusimicrobium minutum (strain Pei191).